The following is a 1015-amino-acid chain: Transposase for transposon Tn3 (1015 aa).

This sequence belongs to the transposase 7 family.

Its function is as follows. Required for transposition of transposon Tn3. The sequence is that of Transposase for transposon Tn3 (tnpA) from Escherichia coli.